The following is a 945-amino-acid chain: LPS-assembly protein LptD (945 aa).

Residues 1–33 (MALKSPAFRKKFPLLVTGSLLALQPLATSFVVA) form the signal peptide. The segment at 56–98 (AQLPPRPVHDANSVSSSVATAADATGEEASGDKSKLVTEAKGR) is disordered. A compositionally biased stretch (low complexity) spans 65-79 (DANSVSSSVATAADA). Basic and acidic residues predominate over residues 85-98 (SGDKSKLVTEAKGR).

The protein belongs to the LptD family. In terms of assembly, component of the lipopolysaccharide transport and assembly complex. Interacts with LptE and LptA.

It localises to the cell outer membrane. Together with LptE, is involved in the assembly of lipopolysaccharide (LPS) at the surface of the outer membrane. The chain is LPS-assembly protein LptD from Pseudomonas fluorescens (strain ATCC BAA-477 / NRRL B-23932 / Pf-5).